The sequence spans 321 residues: D-alanine--D-alanine ligase (321 aa).

Residues 121 to 315 (RSWFLTNNIN…FVNLIEEILK (195 aa)) form the ATP-grasp domain. Position 148–199 (148–199 (IKRPYVIKPFTQGSSIGVEVIFEEDDFNFANYDFPYGDEVIIEKYIKGRELQ)) interacts with ATP. Mg(2+) is bound by residues glutamate 268, glutamate 282, and asparagine 284.

The protein belongs to the D-alanine--D-alanine ligase family. Mg(2+) is required as a cofactor. The cofactor is Mn(2+).

The protein resides in the cytoplasm. It carries out the reaction 2 D-alanine + ATP = D-alanyl-D-alanine + ADP + phosphate + H(+). The protein operates within cell wall biogenesis; peptidoglycan biosynthesis. Functionally, cell wall formation. The sequence is that of D-alanine--D-alanine ligase from Rickettsia bellii (strain RML369-C).